The chain runs to 514 residues: Na(+)/H(+) antiporter NhaB (514 aa).

12 consecutive transmembrane segments (helical) span residues 23–43, 63–83, 97–117, 120–140, 144–164, 202–222, 238–258, 303–323, 357–377, 391–411, 447–467, and 475–495; these read LALL…PFVA, PLLP…TSAA, LLLM…LFIF, LLLS…AAAF, FLDA…FYGI, LMMH…VGEP, FFLR…LTCM, AVIG…VGLI, LTVF…APII, LFYL…VGTI, ATPN…APLI, and VWMA…CVEF.

The protein belongs to the NhaB Na(+)/H(+) (TC 2.A.34) antiporter family.

The protein resides in the cell inner membrane. The catalysed reaction is 2 Na(+)(in) + 3 H(+)(out) = 2 Na(+)(out) + 3 H(+)(in). Its function is as follows. Na(+)/H(+) antiporter that extrudes sodium in exchange for external protons. The polypeptide is Na(+)/H(+) antiporter NhaB (Salmonella agona (strain SL483)).